A 238-amino-acid chain; its full sequence is 1-(5-phosphoribosyl)-5-[(5-phosphoribosylamino)methylideneamino] imidazole-4-carboxamide isomerase (238 aa).

The Proton acceptor role is filled by D8. The active-site Proton donor is the D127.

Belongs to the HisA/HisF family.

It localises to the cytoplasm. The enzyme catalyses 1-(5-phospho-beta-D-ribosyl)-5-[(5-phospho-beta-D-ribosylamino)methylideneamino]imidazole-4-carboxamide = 5-[(5-phospho-1-deoxy-D-ribulos-1-ylimino)methylamino]-1-(5-phospho-beta-D-ribosyl)imidazole-4-carboxamide. It functions in the pathway amino-acid biosynthesis; L-histidine biosynthesis; L-histidine from 5-phospho-alpha-D-ribose 1-diphosphate: step 4/9. This chain is 1-(5-phosphoribosyl)-5-[(5-phosphoribosylamino)methylideneamino] imidazole-4-carboxamide isomerase, found in Nitratiruptor sp. (strain SB155-2).